The sequence spans 453 residues: MATKTKTQWTCNQCGATAPKWLGQCPGCHNWNSLVEEYVPQARSGTSSRSSTSAIALSSIELENESRIFIDHAGWDRILGGGVVRGSLTLLGGDPGIGKSTLLLQTAERLASQKYKVLYVCGEESVTQTSLRAKRLNISSPLIYLFPETNLDNIKQQIATLEPDILIIDSIQIIFNPTLNSAPGSVAQVREVTYELMQIAKSAQITTFIIGHVTKSGEIAGPRVLEHLVDTVLYFEGNSHANYRMIRSVKNRFGPTNELLILSMHADGLKEVSNPSGLFLQEKTGPTTGSMIIPIIEGSGALLIELQALVSSSPFANPVRKTAGFDPNRFSLLLAVLEKRAQVKLFTMDVFLSITGGLKIIEPAADLGALLAVASSLYNRLLPNNSIVIGEVGLGGEIRHVAHLERRIKEGKLMGFEGAILPEGQISSLPKEIRENFRLQGVKTIKDAIRLLL.

The C4-type zinc finger occupies 11 to 28 (CNQCGATAPKWLGQCPGC). 93-100 (GDPGIGKS) lines the ATP pocket. The short motif at 250 to 254 (KNRFG) is the RadA KNRFG motif element. Residues 349–453 (DVFLSITGGL…TIKDAIRLLL (105 aa)) are lon-protease-like.

Belongs to the RecA family. RadA subfamily.

Functionally, DNA-dependent ATPase involved in processing of recombination intermediates, plays a role in repairing DNA breaks. Stimulates the branch migration of RecA-mediated strand transfer reactions, allowing the 3' invading strand to extend heteroduplex DNA faster. Binds ssDNA in the presence of ADP but not other nucleotides, has ATPase activity that is stimulated by ssDNA and various branched DNA structures, but inhibited by SSB. Does not have RecA's homology-searching function. This is DNA repair protein RadA from Chlamydia pneumoniae (Chlamydophila pneumoniae).